The following is a 663-amino-acid chain: DNA ligase (663 aa).

NAD(+) contacts are provided by residues Asp31–Asp35, Ser80–Leu81, and Glu110. Catalysis depends on Lys112, which acts as the N6-AMP-lysine intermediate. NAD(+)-binding residues include Arg133, Glu170, Lys285, and Lys309. Residues Cys404, Cys407, Cys422, and Cys428 each coordinate Zn(2+). In terms of domain architecture, BRCT spans Phe585 to Glu663.

The protein belongs to the NAD-dependent DNA ligase family. LigA subfamily. Mg(2+) serves as cofactor. Mn(2+) is required as a cofactor.

It carries out the reaction NAD(+) + (deoxyribonucleotide)n-3'-hydroxyl + 5'-phospho-(deoxyribonucleotide)m = (deoxyribonucleotide)n+m + AMP + beta-nicotinamide D-nucleotide.. In terms of biological role, DNA ligase that catalyzes the formation of phosphodiester linkages between 5'-phosphoryl and 3'-hydroxyl groups in double-stranded DNA using NAD as a coenzyme and as the energy source for the reaction. It is essential for DNA replication and repair of damaged DNA. The chain is DNA ligase from Azobacteroides pseudotrichonymphae genomovar. CFP2.